We begin with the raw amino-acid sequence, 172 residues long: Ribosome maturation factor RimM (172 aa).

One can recognise a PRC barrel domain in the interval 96–168; the sequence is DGEFYYHEII…RIEVELMEGL (73 aa).

Belongs to the RimM family. As to quaternary structure, binds ribosomal protein uS19.

The protein resides in the cytoplasm. Its function is as follows. An accessory protein needed during the final step in the assembly of 30S ribosomal subunit, possibly for assembly of the head region. Essential for efficient processing of 16S rRNA. May be needed both before and after RbfA during the maturation of 16S rRNA. It has affinity for free ribosomal 30S subunits but not for 70S ribosomes. The chain is Ribosome maturation factor RimM from Streptococcus thermophilus (strain ATCC BAA-491 / LMD-9).